A 374-amino-acid chain; its full sequence is Gibberellin 3-beta-dioxygenase 1 (374 aa).

Residues 206 to 307 form the Fe2OG dioxygenase domain; the sequence is KACAALQLNS…RFSVAYLYGP (102 aa). Fe cation contacts are provided by H231, D233, and H288. Residue R298 is part of the active site. R298 provides a ligand contact to 2-oxoglutarate.

It belongs to the iron/ascorbate-dependent oxidoreductase family. GA3OX subfamily. The cofactor is L-ascorbate. Fe(2+) serves as cofactor. Expressed in radicles, roots, internodes, cotyledons, leaves and shoots. Barely detected in developing seeds. Not detected in flowers or young fruits.

The enzyme catalyses gibberellin A20 + 2-oxoglutarate + O2 = gibberellin A1 + succinate + CO2. The protein operates within plant hormone biosynthesis; gibberellin biosynthesis. Its function is as follows. Converts the inactive gibberellin (GA) precursors GA9 and GA20 in the bioactives gibberellins GA4 and GA1. Has a small activity on GA29, producing GA8. Unable to convert GA20 to GA5, GA5 to GA3 or GA12 to GA14. Involved in the production of bioactive GA for vegetative growth and development, but not for the 3-beta-hydroxylation of GA in developing seeds. The sequence is that of Gibberellin 3-beta-dioxygenase 1 (LE) from Pisum sativum (Garden pea).